The primary structure comprises 609 residues: Polyadenylate-binding protein 7 (609 aa).

4 RRM domains span residues 24-102, 112-189, 201-278, and 304-381; these read ASLY…WSVR, GNVF…KFMK, TNLY…RAQK, and SNIY…IAQK. The PABC domain maps to 509 to 586; it reads EMKKSIQQRQ…AFEVLKSSKT (78 aa).

This sequence belongs to the polyadenylate-binding protein type-1 family. In terms of tissue distribution, expressed predominantly in siliques.

Its subcellular location is the cytoplasm. It localises to the nucleus. Functionally, binds the poly(A) tail of mRNA. Appears to be an important mediator of the multiple roles of the poly(A) tail in mRNA biogenesis, stability and translation. The sequence is that of Polyadenylate-binding protein 7 (PAB7) from Arabidopsis thaliana (Mouse-ear cress).